The following is a 385-amino-acid chain: 8-amino-7-oxononanoate synthase (385 aa).

Residue Arg27 coordinates substrate. 105-106 (GY) is a binding site for pyridoxal 5'-phosphate. Residue His130 coordinates substrate. Residues Ser176, 201–204 (DEAH), and 232–235 (TMSK) each bind pyridoxal 5'-phosphate. Residue Lys235 is modified to N6-(pyridoxal phosphate)lysine. Residue Thr345 participates in substrate binding.

The protein belongs to the class-II pyridoxal-phosphate-dependent aminotransferase family. BioF subfamily. In terms of assembly, homodimer. Pyridoxal 5'-phosphate is required as a cofactor.

The enzyme catalyses 6-carboxyhexanoyl-[ACP] + L-alanine + H(+) = (8S)-8-amino-7-oxononanoate + holo-[ACP] + CO2. It functions in the pathway cofactor biosynthesis; biotin biosynthesis. Catalyzes the decarboxylative condensation of pimeloyl-[acyl-carrier protein] and L-alanine to produce 8-amino-7-oxononanoate (AON), [acyl-carrier protein], and carbon dioxide. This is 8-amino-7-oxononanoate synthase from Mycobacterium leprae (strain Br4923).